Consider the following 396-residue polypeptide: Elongation factor Tu (396 aa).

A tr-type G domain is found at 10 to 206 (KPHVNVGTIG…ALDASIPEPK (197 aa)). The tract at residues 19-26 (GHVDHGKT) is G1. 19–26 (GHVDHGKT) provides a ligand contact to GTP. A Mg(2+)-binding site is contributed by T26. The interval 60–64 (GITIS) is G2. The G3 stretch occupies residues 81–84 (DCPG). GTP-binding positions include 81-85 (DCPGH) and 136-139 (NKAD). The segment at 136-139 (NKAD) is G4. The interval 174 to 176 (SAL) is G5.

The protein belongs to the TRAFAC class translation factor GTPase superfamily. Classic translation factor GTPase family. EF-Tu/EF-1A subfamily. In terms of assembly, monomer.

Its subcellular location is the cytoplasm. The enzyme catalyses GTP + H2O = GDP + phosphate + H(+). GTP hydrolase that promotes the GTP-dependent binding of aminoacyl-tRNA to the A-site of ribosomes during protein biosynthesis. The chain is Elongation factor Tu from Dichelobacter nodosus (strain VCS1703A).